Reading from the N-terminus, the 178-residue chain is Natriuretic and helokinestatin peptides (178 aa).

An N-terminal signal peptide occupies residues 1–25; it reads MNPRLACSTWLPLLLVLFTLDQGRA. 5 propeptides span residues 26-58, 69-73, 85-89, 103-112, and 123-146; these read NPVE…SEEN, ASDEN, ASEQKGPPFN, and AANE…RNKR. 2 disordered regions span residues 69–107 and 135–155; these read ASDE…SEQK and RSFE…GCFG. Cys153 and Cys169 are joined by a disulfide.

This sequence in the C-terminal section; belongs to the natriuretic peptide family. As to expression, expressed by the venom gland.

The protein localises to the secreted. Helokinestatins antagonize the vasodilatory actions of bradykinin at the B2 bradykinin receptor (BDKRB2), with helokinestatin-1 being the most potent antagonist. In terms of biological role, exhibits hypotensive and vasodepressor activities, possibly by targeting natriuretic peptide receptors NPR1 and NPR2. This Heloderma suspectum cinctum (Banded Gila monster) protein is Natriuretic and helokinestatin peptides.